The chain runs to 204 residues: Probable chorismate pyruvate-lyase (204 aa).

The substrate site is built by Arg75, Leu113, and Glu160.

Belongs to the UbiC family.

It is found in the cytoplasm. It carries out the reaction chorismate = 4-hydroxybenzoate + pyruvate. It functions in the pathway cofactor biosynthesis; ubiquinone biosynthesis. Functionally, removes the pyruvyl group from chorismate, with concomitant aromatization of the ring, to provide 4-hydroxybenzoate (4HB) for the ubiquinone pathway. The sequence is that of Probable chorismate pyruvate-lyase from Alcanivorax borkumensis (strain ATCC 700651 / DSM 11573 / NCIMB 13689 / SK2).